The following is a 257-amino-acid chain: Snake venom serine protease serpentokallikrein-2 (257 aa).

The signal sequence occupies residues 1 to 18; the sequence is MVLIRVLANLLILQLSYA. The propeptide occupies 19–24; the sequence is QKSSEL. The region spanning 25-248 is the Peptidase S1 domain; the sequence is VIGGDECNIN…HLDWIKGIIA (224 aa). Disulfide bonds link Cys-31-Cys-162, Cys-49-Cys-65, Cys-97-Cys-255, Cys-141-Cys-209, Cys-173-Cys-188, and Cys-199-Cys-224. Catalysis depends on His-64, which acts as the Charge relay system. Residue Asn-102 is glycosylated (N-linked (GlcNAc...) asparagine). Catalysis depends on Asp-109, which acts as the Charge relay system. Ser-203 functions as the Charge relay system in the catalytic mechanism.

The protein belongs to the peptidase S1 family. Snake venom subfamily. In terms of assembly, monomer. As to expression, expressed by the venom gland.

The protein resides in the secreted. Functionally, snake venom serine protease that may act in the hemostasis system of the prey. This chain is Snake venom serine protease serpentokallikrein-2, found in Protobothrops mucrosquamatus (Taiwan habu).